Reading from the N-terminus, the 1053-residue chain is 3-hydroxy-3-methylglutaryl-coenzyme A reductase (1053 aa).

The Cytoplasmic segment spans residues 1–8; it reads MIYKLAAR. A helical transmembrane segment spans residues 9–29; it reads YPIQVIAIVGILVSMAYFSFL. The Lumenal segment spans residues 30-203; that stretch reads EALTQEDFPV…LKIASQASKT (174 aa). N137 carries an N-linked (GlcNAc...) asparagine glycan. A helical membrane pass occupies residues 204–224; sequence ELLIVGTAYACMLISIVSLYL. In terms of domain architecture, SSD spans 204 to 365; sequence ELLIVGTAYA…FSFFVAILTL (162 aa). At 225-232 the chain is on the cytoplasmic side; that stretch reads KMRRLGSK. A helical membrane pass occupies residues 233–253; the sequence is FWLFFSVLLSTLFSVQFAMTL. Over 254–258 the chain is Lumenal; the sequence is VRASG. The helical transmembrane segment at 259–279 threads the bilayer; that stretch reads VRISLVSLIESLPFLINVVAL. The Cytoplasmic segment spans residues 280–320; sequence DKAAELTRQVITRCSVSDSHSPMHEDIAKACRNAAPPILRH. Transmembrane regions (helical) follow at residues 321 to 341 and 342 to 362; these read FSFGIVVLAIFSYCNFGIKQF and FLFAAVMIYDLLLLFSFFVAI. Topologically, residues 363-417 are cytoplasmic; it reads LTLKLEMRRYNAKDDVRKVLIEEGLSESTARHVADGNDSSATTSAGSRYFKVRYG. A helical transmembrane segment spans residues 418-438; sequence TKIILFIFIAFNLFELCSIPF. Residues 439–526 lie on the Lumenal side of the membrane; that stretch reads KHYAATSAAA…NNWSHYISAS (88 aa). Residue N518 is glycosylated (N-linked (GlcNAc...) asparagine). The helical transmembrane segment at 527–547 threads the bilayer; the sequence is FLSKWIVCALSLSIAVNVFLL. Over 548–1053 the chain is Cytoplasmic; the sequence is NAARLNSIKE…KSVNSRVPGR (506 aa). E712 acts as the Charge relay system in catalysis. 718 to 724 contacts CoA; it reads STMRGCK. Residues 779–781 and 806–814 each bind NADP(+); these read SRF and DAMGMNMIS. Catalysis depends on K846, which acts as the Charge relay system. 875-877 contacts CoA; that stretch reads VLK. The Charge relay system role is filled by D922. A CoA-binding site is contributed by 1017–1018; that stretch reads SH. H1018 (proton donor) is an active-site residue. Position 1022–1023 (1022–1023) interacts with NADP(+); it reads NR. S1024 is modified (phosphoserine). T1028 is subject to Phosphothreonine. The interval 1028–1053 is disordered; sequence TPAMDSSAKKPATDALKSVNSRVPGR.

Belongs to the HMG-CoA reductase family.

Its subcellular location is the endoplasmic reticulum membrane. The protein localises to the nucleus envelope. The enzyme catalyses (R)-mevalonate + 2 NADP(+) + CoA = (3S)-3-hydroxy-3-methylglutaryl-CoA + 2 NADPH + 2 H(+). It functions in the pathway metabolic intermediate biosynthesis; (R)-mevalonate biosynthesis; (R)-mevalonate from acetyl-CoA: step 3/3. Functionally, part of the first module of ergosterol biosynthesis pathway that includes the early steps of the pathway, conserved across all eukaryotes, and which results in the formation of mevalonate from acetyl-coenzyme A (acetyl-CoA). Hmg1 catalyzes the reduction of hydroxymethylglutaryl-CoA (HMG-CoA) to mevalonate. The first module starts with the action of the cytosolic acetyl-CoA acetyltransferase eg10 that catalyzes the formation of acetoacetyl-CoA. The hydroxymethylglutaryl-CoA synthases erg13 then condenses acetyl-CoA with acetoacetyl-CoA to form HMG-CoA. The rate-limiting step of the early module is the reduction to mevalonate by the 3-hydroxy-3-methylglutaryl-coenzyme A (HMG-CoA) reductases hcs1. This is 3-hydroxy-3-methylglutaryl-coenzyme A reductase from Schizosaccharomyces pombe (strain 972 / ATCC 24843) (Fission yeast).